A 224-amino-acid chain; its full sequence is Cytidylate kinase (224 aa).

12-20 (GPAGAGKST) is a binding site for ATP.

This sequence belongs to the cytidylate kinase family. Type 1 subfamily.

The protein resides in the cytoplasm. It catalyses the reaction CMP + ATP = CDP + ADP. The enzyme catalyses dCMP + ATP = dCDP + ADP. The protein is Cytidylate kinase of Caldanaerobacter subterraneus subsp. tengcongensis (strain DSM 15242 / JCM 11007 / NBRC 100824 / MB4) (Thermoanaerobacter tengcongensis).